Here is a 260-residue protein sequence, read N- to C-terminus: Putative ABC transporter ATP-binding protein (260 aa).

Positions 4–243 constitute an ABC transporter domain; sequence ISMKNVTLKK…QVLENFYESP (240 aa). Residue 36–43 coordinates ATP; the sequence is GLNGSGKT.

This sequence belongs to the ABC transporter superfamily.

This chain is Putative ABC transporter ATP-binding protein (abcX), found in Streptococcus mutans serotype c (strain ATCC 700610 / UA159).